A 703-amino-acid polypeptide reads, in one-letter code: Ubiquitin-like modifier-activating enzyme ATG7 (703 aa).

An N-acetylalanine modification is found at Ala2. The short motif at Phe15–Pro17 is the FAP motif element. Residue Lys45 forms a Glycyl lysine isopeptide (Lys-Gly) (interchain with G-Cter in ubiquitin) linkage. The active-site Glycyl thioester intermediate is Cys572. Ser698 bears the Phosphoserine mark.

This sequence belongs to the ATG7 family. Homodimer. Interacts with ATG3; this interaction is essential for the transfer of ATG8-like proteins's thioester from ATG7 to ATG3 and plays a role in the conjugation of ATG12 to ATG5. Interacts with ATG12. Forms intermediate conjugates with GABARAPL1. Forms intermediate conjugates with ATG8-like proteins such as GABARAP, GABARAPL2 or MAP1LC3A. Interacts with EP300 acetyltransferase. Interacts with FOXO1. Acetylated by EP300. Post-translationally, polyubiquitinated on Lys-45 via 'Lys-63'-linked ubiquitin by TRIM32; this modification positiely regulates ATG8 and ATG12 activating enzyme activity leading to initiation of autophagy under metabolic stress. As to expression, widely expressed, especially in kidney, liver, lymph nodes and bone marrow.

Its subcellular location is the cytoplasm. It localises to the preautophagosomal structure. In terms of biological role, E1-like activating enzyme involved in the 2 ubiquitin-like systems required for cytoplasm to vacuole transport (Cvt) and autophagy. Activates ATG12 for its conjugation with ATG5 as well as the ATG8 family proteins for their conjugation with phosphatidylethanolamine. Both systems are needed for the ATG8 association to Cvt vesicles and autophagosomes membranes. Required for autophagic death induced by caspase-8 inhibition. Facilitates LC3-I lipidation with phosphatidylethanolamine to form LC3-II which is found on autophagosomal membranes. Required for mitophagy which contributes to regulate mitochondrial quantity and quality by eliminating the mitochondria to a basal level to fulfill cellular energy requirements and preventing excess ROS production. Modulates p53/TP53 activity to regulate cell cycle and survival during metabolic stress. Also plays a key role in the maintenance of axonal homeostasis, the prevention of axonal degeneration, the maintenance of hematopoietic stem cells, the formation of Paneth cell granules, as well as in adipose differentiation. Plays a role in regulating the liver clock and glucose metabolism by mediating the autophagic degradation of CRY1 (clock repressor) in a time-dependent manner. The chain is Ubiquitin-like modifier-activating enzyme ATG7 from Homo sapiens (Human).